A 143-amino-acid polypeptide reads, in one-letter code: Large ribosomal subunit protein uL11 (143 aa).

It belongs to the universal ribosomal protein uL11 family. In terms of assembly, part of the ribosomal stalk of the 50S ribosomal subunit. Interacts with L10 and the large rRNA to form the base of the stalk. L10 forms an elongated spine to which L12 dimers bind in a sequential fashion forming a multimeric L10(L12)X complex. In terms of processing, one or more lysine residues are methylated.

Forms part of the ribosomal stalk which helps the ribosome interact with GTP-bound translation factors. The polypeptide is Large ribosomal subunit protein uL11 (Paraburkholderia phytofirmans (strain DSM 17436 / LMG 22146 / PsJN) (Burkholderia phytofirmans)).